A 48-amino-acid chain; its full sequence is uncharacterized protein (48 aa).

Positions 1-48 (MTKIPINIPATSGKIKFGITPSSNKSPSLSPSPSNGQLGGGRGYILEP) are disordered. Low complexity predominate over residues 21–36 (PSSNKSPSLSPSPSNG). A compositionally biased stretch (gly residues) spans 37–48 (QLGGGRGYILEP).

This is an uncharacterized protein from Dictyostelium discoideum (Social amoeba).